An 872-amino-acid chain; its full sequence is Potassium voltage-gated channel subfamily KQT member 3 (872 aa).

The tract at residues 1-43 (MGLKARRAAGAAGGGGDGGGGGGGAANPAGGDAAAAGDEERKV) is disordered. Topologically, residues 1–120 (MGLKARRAAG…IYDALERPRG (120 aa)) are cytoplasmic. Residues 11 to 25 (AAGGGGDGGGGGGGA) show a composition bias toward gly residues. Low complexity predominate over residues 26 to 36 (ANPAGGDAAAA). A Phosphothreonine modification is found at Thr81. The chain crosses the membrane as a helical span at residues 121 to 143 (WALLYHALVFLIVLGCLILAVLT). Over 144–153 (TFKEYETVSG) the chain is Extracellular. A helical transmembrane segment spans residues 154–175 (DWLLLLETFAIFIFGAEFALRI). The Cytoplasmic segment spans residues 176–193 (WAAGCCCRYKGWRGRLKF). A helical transmembrane segment spans residues 194–213 (ARKPLCMLDIFVLIASVPVV). Topologically, residues 214-225 (AVGNQGNVLATS) are extracellular. A helical; Voltage-sensor transmembrane segment spans residues 226–244 (LRSLRFLQILRMLRMDRRG). Arg243 contributes to the a 1,2-diacyl-sn-glycero-3-phospho-(1D-myo-inositol-4,5-bisphosphate) binding site. The Cytoplasmic segment spans residues 245-256 (GTWKLLGSAICA). Thr246 carries the phosphothreonine modification. The helical transmembrane segment at 257-282 (HSKELITAWYIGFLTLILSSFLVYLV) threads the bilayer. A 1,2-diacyl-sn-glycero-3-phospho-(1D-myo-inositol-4,5-bisphosphate) is bound at residue Lys259. Topologically, residues 283–302 (EKDVPEVDAQGEEMKEEFET) are extracellular. Positions 303-315 (YADALWWGLITLA) form an intramembrane region, pore-forming. Residues 316–321 (TIGYGD) carry the Selectivity filter motif. The Extracellular portion of the chain corresponds to 316-326 (TIGYGDKTPKT). Residues 327–353 (WEGRLIAATFSLIGVSFFALPAGILGS) traverse the membrane as a helical segment. At 354–872 (GLALKVQEQH…SVWTPSNKPI (519 aa)) the chain is on the cytoplasmic side. The segment at 356-537 (ALKVQEQHRQ…RLYKKKFKET (182 aa)) is mediates interaction with calmodulin. Lys366 lines the a 1,2-diacyl-sn-glycero-3-phospho-(1D-myo-inositol-4,5-bisphosphate) pocket. 2 disordered regions span residues 575–611 (GPPS…PSTS) and 764–872 (ADLQ…NKPI). Composition is skewed to polar residues over residues 587-600 (KGSA…QSPR) and 843-872 (DPFT…NKPI).

This sequence belongs to the potassium channel family. KQT (TC 1.A.1.15) subfamily. Kv7.3/KCNQ3 sub-subfamily. In terms of assembly, heterotetramer with KCNQ2; forms heterotetrameric native M-channel responsible for the M-current. Interacts with calmodulin; the interaction is calcium-independent, constitutive and participates in the proper assembly of a functional M-channel. Heteromultimer with KCNQ5. May associate with KCNE2. Interacts with IQCJ-SCHIP1. Interacts (via the pore module) with SLC5A3/SMIT1; forms a coregulatory complex that alters ion selectivity, voltage dependence and gating kinetics of the channel. In terms of processing, KCNQ2/KCNQ3 are ubiquitinated by NEDD4L. Ubiquitination leads to protein degradation. Degradation induced by NEDD4L is inhibited by USP36. As to expression, predominantly expressed in brain.

The protein localises to the cell membrane. The enzyme catalyses K(+)(in) = K(+)(out). It carries out the reaction Rb(+)(in) = Rb(+)(out). It catalyses the reaction Cs(+)(in) = Cs(+)(out). The catalysed reaction is Na(+)(in) = Na(+)(out). With respect to regulation, phosphatidylinositol-4,5-bisphosphate (PIP2) potentiates the activation of KCNQ channels by enhancing the electro-mechanical coupling of the voltage-sensing domain (VSD) and the pore-forming domain (PD). In the closed state of the channel, PIP2 is anchored at the S2-S3 loop; upon channel activation, PIP2 interacts with the S4-S5 linker and is involved in channel gating. Calcium suppresses KCNQ2-KCNQ3 channel currents, with calcium-bound calmodulin inducing a change in channel configuration which leads to the reduction of channel affinity for PIP2 and subsequent current suppression. M-channel is activated by the anticonvulsant retigabine. In terms of biological role, pore-forming subunit of the voltage-gated potassium (Kv) M-channel which is responsible for the M-current, a key controller of neuronal excitability. M-channel is composed of pore-forming subunits KCNQ2 and KCNQ3 assembled as heterotetramers. The native M-current has a slowly activating and deactivating potassium conductance which plays a critical role in determining the subthreshold electrical excitability of neurons as well as the responsiveness to synaptic inputs. M-channel is selectively permeable in vitro to other cations besides potassium, in decreasing order of affinity K(+) &gt; Rb(+) &gt; Cs(+) &gt; Na(+). M-channel association with SLC5A3/SMIT1 alters channel ion selectivity, increasing Na(+) and Cs(+) permeation relative to K(+). Suppressed by activation of M1 muscarinic acetylcholine receptors. KCNQ3 also associates with KCNQ5 to form a functional channel in vitro and may also contribute to the M-current in brain. This chain is Potassium voltage-gated channel subfamily KQT member 3, found in Homo sapiens (Human).